The sequence spans 426 residues: MLDIKQIRENPQLVQERLNSRSGKYDIEPILQLDRQQRELEGTRSQLQARSNEIGKIVGQKIKSGINSQDPEIQALRDEGNSVKATLSELEPQEKDLKAQIAQLVLALPNLPSDSTPLGKNEEDNVEVRRWGDEYIPQNPNILPHWEIGEKLGILNVERAVKVAQSRFVALVGAGAALERALIQFMLTLHTQAGYLEVSPPLLVNTESLTATGQLPKFAEESFKCADDDLWLIPTAEVPVTNLYRGEILAAEDLPIYHCAFTPCFRREAGSYGRDMRGLIRLHQFNKVEMVKFVEPSTSFDELEKLVGNAEAILQALRLPYRVVNLSTGDLGFASTKTYDLEVWLPSSGKYREISSCSNTIDFQARRADIRFKEAGKKGTQFVHTLNGSGLAVGRTMAAILENYQQPDGTVKIPEALQPYLGREVL.

235–237 (TAE) serves as a coordination point for L-serine. 266-268 (RRE) is an ATP binding site. E289 is an L-serine binding site. Position 353-356 (353-356 (EISS)) interacts with ATP. An L-serine-binding site is contributed by S389.

Belongs to the class-II aminoacyl-tRNA synthetase family. Type-1 seryl-tRNA synthetase subfamily. In terms of assembly, homodimer. The tRNA molecule binds across the dimer.

The protein localises to the cytoplasm. It carries out the reaction tRNA(Ser) + L-serine + ATP = L-seryl-tRNA(Ser) + AMP + diphosphate + H(+). The catalysed reaction is tRNA(Sec) + L-serine + ATP = L-seryl-tRNA(Sec) + AMP + diphosphate + H(+). The protein operates within aminoacyl-tRNA biosynthesis; selenocysteinyl-tRNA(Sec) biosynthesis; L-seryl-tRNA(Sec) from L-serine and tRNA(Sec): step 1/1. Catalyzes the attachment of serine to tRNA(Ser). Is also able to aminoacylate tRNA(Sec) with serine, to form the misacylated tRNA L-seryl-tRNA(Sec), which will be further converted into selenocysteinyl-tRNA(Sec). This chain is Serine--tRNA ligase, found in Nostoc punctiforme (strain ATCC 29133 / PCC 73102).